The chain runs to 342 residues: Heat-inducible transcription repressor HrcA (342 aa).

Belongs to the HrcA family.

Its function is as follows. Negative regulator of class I heat shock genes (grpE-dnaK-dnaJ and groELS operons). Prevents heat-shock induction of these operons. This chain is Heat-inducible transcription repressor HrcA, found in Methylibium petroleiphilum (strain ATCC BAA-1232 / LMG 22953 / PM1).